The following is a 446-amino-acid chain: Tubulin beta-1 chain (446 aa).

The MREI motif signature appears at 1-4; that stretch reads MREI. Positions 11, 69, 138, 142, 143, 144, 204, and 226 each coordinate GTP. Glu69 contributes to the Mg(2+) binding site. A disordered region spans residues 426–446; sequence QDATAEEEGEFEEEGEYEDGA. Residues 429–446 are compositionally biased toward acidic residues; it reads TAEEEGEFEEEGEYEDGA. 5-glutamyl polyglutamate is present on Glu438.

This sequence belongs to the tubulin family. In terms of assembly, dimer of alpha and beta chains. A typical microtubule is a hollow water-filled tube with an outer diameter of 25 nm and an inner diameter of 15 nM. Alpha-beta heterodimers associate head-to-tail to form protofilaments running lengthwise along the microtubule wall with the beta-tubulin subunit facing the microtubule plus end conferring a structural polarity. Microtubules usually have 13 protofilaments but different protofilament numbers can be found in some organisms and specialized cells. Mg(2+) is required as a cofactor. Some glutamate residues at the C-terminus are polyglycylated, resulting in polyglycine chains on the gamma-carboxyl group. Glycylation is mainly limited to tubulin incorporated into axonemes (cilia and flagella) whereas glutamylation is prevalent in neuronal cells, centrioles, axonemes, and the mitotic spindle. Both modifications can coexist on the same protein on adjacent residues, and lowering polyglycylation levels increases polyglutamylation, and reciprocally. The precise function of polyglycylation is still unclear. Post-translationally, some glutamate residues at the C-terminus are polyglutamylated, resulting in polyglutamate chains on the gamma-carboxyl group. Polyglutamylation plays a key role in microtubule severing by spastin (SPAST). SPAST preferentially recognizes and acts on microtubules decorated with short polyglutamate tails: severing activity by SPAST increases as the number of glutamates per tubulin rises from one to eight, but decreases beyond this glutamylation threshold. In terms of tissue distribution, brain.

It localises to the cytoplasm. Its subcellular location is the cytoskeleton. In terms of biological role, tubulin is the major constituent of microtubules, a cylinder consisting of laterally associated linear protofilaments composed of alpha- and beta-tubulin heterodimers. Microtubules grow by the addition of GTP-tubulin dimers to the microtubule end, where a stabilizing cap forms. Below the cap, tubulin dimers are in GDP-bound state, owing to GTPase activity of alpha-tubulin. The sequence is that of Tubulin beta-1 chain (tubb1) from Notothenia neglecta (Yellowbelly rockcod).